A 243-amino-acid polypeptide reads, in one-letter code: Ribosomal RNA small subunit methyltransferase J (243 aa).

Residues 112–113 and Asp164 each bind S-adenosyl-L-methionine; that span reads ER.

Belongs to the methyltransferase superfamily. RsmJ family.

Its subcellular location is the cytoplasm. The enzyme catalyses guanosine(1516) in 16S rRNA + S-adenosyl-L-methionine = N(2)-methylguanosine(1516) in 16S rRNA + S-adenosyl-L-homocysteine + H(+). Specifically methylates the guanosine in position 1516 of 16S rRNA. The chain is Ribosomal RNA small subunit methyltransferase J from Legionella pneumophila subsp. pneumophila (strain Philadelphia 1 / ATCC 33152 / DSM 7513).